Consider the following 272-residue polypeptide: uncharacterized protein (272 aa).

Glutamate 163 is an active-site residue.

This sequence belongs to the glycosyl hydrolase 25 family.

This is an uncharacterized protein from Escherichia coli O157:H7.